The sequence spans 208 residues: V-type ATP synthase subunit D (208 aa).

It belongs to the V-ATPase D subunit family.

Produces ATP from ADP in the presence of a proton gradient across the membrane. The polypeptide is V-type ATP synthase subunit D (Streptococcus pyogenes serotype M49 (strain NZ131)).